The chain runs to 117 residues: G antigen 6 (117 aa).

The disordered stretch occupies residues 1–117; that stretch reads MSWRGRSTYY…PEEGEKQSQC (117 aa). Acidic residues-rich tracts occupy residues 32-45 and 87-96; these read FSDEVEPATPEEGE and ECEDGPDGQE. Residues 103–117 are compositionally biased toward basic and acidic residues; that stretch reads EEVKTPEEGEKQSQC.

It belongs to the GAGE family. In terms of tissue distribution, expressed in a variety of tumor tissues but not in normal tissues, except testis.

The polypeptide is G antigen 6 (GAGE6) (Homo sapiens (Human)).